The sequence spans 370 residues: Psilocybin cluster transcription regulator (370 aa).

Disordered stretches follow at residues 1–39 and 102–221; these read MAPT…ADIS and YQTG…RRRR. Positions 143 to 152 are enriched in polar residues; sequence IQHQDQQQSG. Residues 183–202 are compositionally biased toward low complexity; that stretch reads TSTSTPSGGRRGGRSATMGS. The span at 204-218 shows a compositional bias: basic and acidic residues; it reads EWSRQRKDNHKEVER. A basic motif region spans residues 208–221; it reads QRKDNHKEVERRRR. The bHLH domain occupies 208–258; it reads QRKDNHKEVERRRRGNINEGINELGRIVPSGSGEKAKGAILSRAVQYIHHL. Residues 222–258 are helix-loop-helix motif; the sequence is GNINEGINELGRIVPSGSGEKAKGAILSRAVQYIHHL. The segment at 317-370 is disordered; it reads VSTAGAGSGAAKDESAAGTKRRSTDGADAAGTNVEGGNNDNAEGERDGKRQRTE. Residues 359–370 are compositionally biased toward basic and acidic residues; sequence EGERDGKRQRTE.

The protein localises to the nucleus. Transcription factor that may regulate the expression of the gene cluster that mediates the biosynthesis of psilocybin, a psychotropic tryptamine-derived natural product. This is Psilocybin cluster transcription regulator from Psilocybe cyanescens.